A 646-amino-acid polypeptide reads, in one-letter code: Translation initiation factor IF-2 (646 aa).

The tr-type G domain maps to 146 to 315 (PRPPVVTVMG…LLVAEMEELR (170 aa)). Positions 155–162 (GHVDHGKT) are G1. 155-162 (GHVDHGKT) serves as a coordination point for GTP. The tract at residues 180-184 (GITQH) is G2. The interval 201-204 (DTPG) is G3. GTP contacts are provided by residues 201–205 (DTPGH) and 255–258 (NKID). The interval 255–258 (NKID) is G4. The interval 291 to 293 (SAK) is G5.

It belongs to the TRAFAC class translation factor GTPase superfamily. Classic translation factor GTPase family. IF-2 subfamily.

Its subcellular location is the cytoplasm. Functionally, one of the essential components for the initiation of protein synthesis. Protects formylmethionyl-tRNA from spontaneous hydrolysis and promotes its binding to the 30S ribosomal subunits. Also involved in the hydrolysis of GTP during the formation of the 70S ribosomal complex. This Clostridioides difficile (strain 630) (Peptoclostridium difficile) protein is Translation initiation factor IF-2.